Consider the following 535-residue polypeptide: Ribonuclease Y (535 aa).

The chain crosses the membrane as a helical span at residues isoleucine 4–methionine 24. The disordered stretch occupies residues threonine 107 to glutamate 145. In terms of domain architecture, KH spans threonine 225–leucine 285. Residues valine 351–alanine 444 form the HD domain.

This sequence belongs to the RNase Y family.

Its subcellular location is the cell membrane. Endoribonuclease that initiates mRNA decay. This Streptococcus agalactiae serotype Ia (strain ATCC 27591 / A909 / CDC SS700) protein is Ribonuclease Y.